The sequence spans 231 residues: Proteasome subunit alpha type-2 (231 aa).

It belongs to the peptidase T1A family. As to quaternary structure, the 26S proteasome consists of a 20S proteasome core and two 19S regulatory subunits. The 20S proteasome core is composed of 28 subunits that are arranged in four stacked rings, resulting in a barrel-shaped structure. The two end rings are each formed by seven alpha subunits, and the two central rings are each formed by seven beta subunits. The catalytic chamber with the active sites is on the inside of the barrel.

Its subcellular location is the cytoplasm. It localises to the nucleus. The proteasome is a multicatalytic proteinase complex which is characterized by its ability to cleave peptides with Arg, Phe, Tyr, Leu, and Glu adjacent to the leaving group at neutral or slightly basic pH. The proteasome has an ATP-dependent proteolytic activity. This is Proteasome subunit alpha type-2 from Trypanosoma brucei brucei.